The chain runs to 386 residues: RNA polymerase sigma factor SigA (386 aa).

A sigma-70 factor domain-2 region spans residues 154-224 (LAEANLRLVV…TRAIADQART (71 aa)). The Interaction with polymerase core subunit RpoC motif lies at 178–181 (DLIQ). Positions 233–309 (ETINKLIRVQ…DDVIESPVDY (77 aa)) are sigma-70 factor domain-3. The interval 322 to 375 (VMDTLTDREENVLRMRFGLDDGRMHTLEDVGKQFKVTRERIRQIEAKAIKKLRH) is sigma-70 factor domain-4. The H-T-H motif DNA-binding region spans 348–367 (LEDVGKQFKVTRERIRQIEA).

It belongs to the sigma-70 factor family. RpoD/SigA subfamily. In terms of assembly, interacts transiently with the RNA polymerase catalytic core.

The protein localises to the cytoplasm. Sigma factors are initiation factors that promote the attachment of RNA polymerase to specific initiation sites and are then released. This sigma factor is the primary sigma factor during exponential growth. The protein is RNA polymerase sigma factor SigA of Lactococcus lactis subsp. lactis (strain IL1403) (Streptococcus lactis).